Reading from the N-terminus, the 133-residue chain is Small ribosomal subunit protein uS8 (133 aa).

The protein belongs to the universal ribosomal protein uS8 family. In terms of assembly, part of the 30S ribosomal subunit.

One of the primary rRNA binding proteins, it binds directly to 16S rRNA central domain where it helps coordinate assembly of the platform of the 30S subunit. The protein is Small ribosomal subunit protein uS8 of Metallosphaera sedula (strain ATCC 51363 / DSM 5348 / JCM 9185 / NBRC 15509 / TH2).